Consider the following 436-residue polypeptide: GTPase Der (436 aa).

EngA-type G domains are found at residues 4–167 and 175–351; these read PTVA…PTEV and IRFS…ESQN. Residues 10–17, 57–61, 119–122, 181–188, 229–233, and 294–297 each bind GTP; these read GRPNVGKS, DTGGI, NKVD, DTAGM, and NKWD. The KH-like domain occupies 352–436; that stretch reads RRISSAVLND…PIHLIARKRK (85 aa).

The protein belongs to the TRAFAC class TrmE-Era-EngA-EngB-Septin-like GTPase superfamily. EngA (Der) GTPase family. In terms of assembly, associates with the 50S ribosomal subunit.

GTPase that plays an essential role in the late steps of ribosome biogenesis. This is GTPase Der from Streptococcus thermophilus (strain ATCC BAA-491 / LMD-9).